The primary structure comprises 196 residues: Imidazole glycerol phosphate synthase subunit HisH (196 aa).

The Glutamine amidotransferase type-1 domain occupies asparagine 2–methionine 196. Catalysis depends on cysteine 77, which acts as the Nucleophile. Residues histidine 178 and glutamate 180 contribute to the active site.

In terms of assembly, heterodimer of HisH and HisF.

It is found in the cytoplasm. It catalyses the reaction 5-[(5-phospho-1-deoxy-D-ribulos-1-ylimino)methylamino]-1-(5-phospho-beta-D-ribosyl)imidazole-4-carboxamide + L-glutamine = D-erythro-1-(imidazol-4-yl)glycerol 3-phosphate + 5-amino-1-(5-phospho-beta-D-ribosyl)imidazole-4-carboxamide + L-glutamate + H(+). The enzyme catalyses L-glutamine + H2O = L-glutamate + NH4(+). The protein operates within amino-acid biosynthesis; L-histidine biosynthesis; L-histidine from 5-phospho-alpha-D-ribose 1-diphosphate: step 5/9. Its function is as follows. IGPS catalyzes the conversion of PRFAR and glutamine to IGP, AICAR and glutamate. The HisH subunit catalyzes the hydrolysis of glutamine to glutamate and ammonia as part of the synthesis of IGP and AICAR. The resulting ammonia molecule is channeled to the active site of HisF. The protein is Imidazole glycerol phosphate synthase subunit HisH of Shigella flexneri.